The following is a 300-amino-acid chain: Protein SPEAR2 (300 aa).

The segment covering 1 to 11 has biased composition (polar residues); it reads MCSNNNTSSGS. Residues 1–64 are disordered; that stretch reads MCSNNNTSSG…PPLSSSPSLP (64 aa). Basic residues predominate over residues 25–38; the sequence is CRKKQKKDKVRRRG. The short motif at 37 to 45 is the SPL element; the sequence is RGPGVAELE. Basic and acidic residues predominate over residues 43–54; the sequence is ELEKIRLQEEYK. Residues 55–64 show a composition bias toward low complexity; sequence PPLSSSPSLP. The EAR motif lies at 294–300; sequence IDLNLKL.

As to quaternary structure, homodimer and heterodimer with SPL and SPEARs. Interacts with SPL, SPEAR1, SPEAR3 and SPEAR4. Expressed in leaves.

Adapter-like transcriptional repressor recruiting TPL/TPR corepressors to inhibit TCP transcription factors. May be involved in leaf development. This chain is Protein SPEAR2, found in Arabidopsis thaliana (Mouse-ear cress).